The following is a 502-amino-acid chain: ATP synthase subunit alpha (502 aa).

Position 169-176 (169-176 (GDRQTGKT)) interacts with ATP.

Belongs to the ATPase alpha/beta chains family. As to quaternary structure, F-type ATPases have 2 components, CF(1) - the catalytic core - and CF(0) - the membrane proton channel. CF(1) has five subunits: alpha(3), beta(3), gamma(1), delta(1), epsilon(1). CF(0) has three main subunits: a(1), b(2) and c(9-12). The alpha and beta chains form an alternating ring which encloses part of the gamma chain. CF(1) is attached to CF(0) by a central stalk formed by the gamma and epsilon chains, while a peripheral stalk is formed by the delta and b chains.

The protein resides in the cell membrane. It catalyses the reaction ATP + H2O + 4 H(+)(in) = ADP + phosphate + 5 H(+)(out). Functionally, produces ATP from ADP in the presence of a proton gradient across the membrane. The alpha chain is a regulatory subunit. In Staphylococcus aureus (strain COL), this protein is ATP synthase subunit alpha.